Reading from the N-terminus, the 289-residue chain is Thiosulfate sulfurtransferase (289 aa).

The region spanning 24–142 (VGAGLRVLDA…WVKEGHPVTA (119 aa)) is the Rhodanese 1 domain. The hinge stretch occupies residues 143 to 158 (EPSQPAEAVFKAKLDK). The Rhodanese 2 domain occupies 172 to 284 (GSKKFQVVDS…WFHRAPPQYK (113 aa)). Arginine 186 contributes to the substrate binding site. Catalysis depends on cysteine 244, which acts as the Cysteine persulfide intermediate. Lysine 246 provides a ligand contact to substrate.

In terms of assembly, monomer. Expressed in numerous tissues.

It is found in the mitochondrion matrix. It carries out the reaction thiosulfate + hydrogen cyanide = thiocyanate + sulfite + 2 H(+). In terms of biological role, together with MRPL18, acts as a mitochondrial import factor for the cytosolic 5S rRNA. Only the nascent unfolded cytoplasmic form is able to bind to the 5S rRNA. Formation of iron-sulfur complexes and cyanide detoxification. In Gallus gallus (Chicken), this protein is Thiosulfate sulfurtransferase (TST).